A 297-amino-acid polypeptide reads, in one-letter code: Cyclin-dependent kinase 1 (297 aa).

N-acetylmethionine is present on Met-1. Tyr-4 bears the Phosphotyrosine; by PKR mark. The 284-residue stretch at 4 to 287 folds into the Protein kinase domain; the sequence is YTKIEKIGEG…GKMALNHPYF (284 aa). N6-acetyllysine; alternate is present on residues Lys-6 and Lys-9. Residues Lys-6 and Lys-9 each participate in a glycyl lysine isopeptide (Lys-Gly) (interchain with G-Cter in SUMO2); alternate cross-link. Position 10–18 (10–18) interacts with ATP; it reads IGEGTYGVV. Position 14 is a phosphothreonine; by PKMYT1 (Thr-14). Tyr-15 is subject to Phosphotyrosine; by PKMYT1, WEE1, WEE2 and PKC/PRKCD. Residue Tyr-19 is modified to Phosphotyrosine. Lys-20 is covalently cross-linked (Glycyl lysine isopeptide (Lys-Gly) (interchain with G-Cter in SUMO2)). Lys-33 lines the ATP pocket. Ser-39 carries the post-translational modification Phosphoserine. At Tyr-77 the chain carries Phosphotyrosine. Catalysis depends on Asp-128, which acts as the Proton acceptor. Residue Lys-139 forms a Glycyl lysine isopeptide (Lys-Gly) (interchain with G-Cter in SUMO2) linkage. Thr-141 is modified (phosphothreonine). A Phosphothreonine; by CAK modification is found at Thr-161. Ser-178 carries the post-translational modification Phosphoserine. Thr-222 bears the Phosphothreonine mark. Lys-245 carries the post-translational modification N6-succinyllysine. Ser-248 is subject to Phosphoserine.

It belongs to the protein kinase superfamily. CMGC Ser/Thr protein kinase family. CDC2/CDKX subfamily. Forms a stable but non-covalent complex with a regulatory subunit and with a cyclin. The cyclin subunit imparts substrate specificity to the complex. Interacts with cyclins-B (CCNB1, CCNB2 and CCNB3) to form a serine/threonine kinase holoenzyme complex also known as maturation promoting factor (MPF). Promotes G2-M transition when in complex with a cyclin-B. Can also form CDK1-cylin-D and CDK1-cyclin-E complexes that phosphorylate RB1 in vitro. Associates with cyclins-A and B1 during S-phase in regenerating hepatocytes. Interacts with DLGAP5. Binds to the CDK inhibitors CDKN1A/p21 and CDKN1B/p27. Interacts with catalytically active CCNB1 and RALBP1 during mitosis to form an endocytotic complex during interphase. Interacts with FANCC. Interacts with CEP63; this interaction recruits CDK1 to centrosomes. Interacts with CENPA. Interacts with NR1D1. Interacts with proteasome subunit PSMA8; to participate in meiosis progression during spermatogenesis. In terms of assembly, unable to complex with cyclin-B1 and also fails to bind to CDKN1A/p21. As to quaternary structure, (Microbial infection) Interacts with severe fever with thrombocytopenia syndrome virus (SFTSV) NSs; this interaction is inclusion body dependent, it inhibits the formation and nuclear import of the cyclin B1-CDK1 complex and leads to cell cycle arrest. Post-translationally, phosphorylation at Thr-161 by CAK/CDK7 activates kinase activity. Phosphorylation at Thr-14 and Tyr-15 by PKMYT1 prevents nuclear translocation. Phosphorylation at Tyr-15 by WEE1 and WEE2 inhibits the protein kinase activity and acts as a negative regulator of entry into mitosis (G2 to M transition). Phosphorylation by PKMYT1 and WEE1 takes place during mitosis to keep CDK1-cyclin-B complexes inactive until the end of G2. By the end of G2, PKMYT1 and WEE1 are inactivated, but CDC25A and CDC25B are activated. Dephosphorylation by active CDC25A and CDC25B at Thr-14 and Tyr-15, leads to CDK1 activation at the G2-M transition. Phosphorylation at Tyr-15 by WEE2 during oogenesis is required to maintain meiotic arrest in oocytes during the germinal vesicle (GV) stage, a long period of quiescence at dictyate prophase I, leading to prevent meiotic reentry. Phosphorylation by WEE2 is also required for metaphase II exit during egg activation to ensure exit from meiosis in oocytes and promote pronuclear formation. Phosphorylated at Tyr-4 by PKR/EIF2AK2 upon genotoxic stress. This phosphorylation triggers CDK1 polyubiquitination and subsequent proteolysis, thus leading to G2 arrest. In response to UV irradiation, phosphorylation at Tyr-15 by PRKCD activates the G2/M DNA damage checkpoint. Polyubiquitinated upon genotoxic stress. In terms of tissue distribution, found in breast cancer tissues.

Its subcellular location is the nucleus. It is found in the cytoplasm. The protein localises to the mitochondrion. It localises to the cytoskeleton. The protein resides in the microtubule organizing center. Its subcellular location is the centrosome. It is found in the spindle. It catalyses the reaction L-seryl-[protein] + ATP = O-phospho-L-seryl-[protein] + ADP + H(+). It carries out the reaction L-threonyl-[protein] + ATP = O-phospho-L-threonyl-[protein] + ADP + H(+). The catalysed reaction is [DNA-directed RNA polymerase] + ATP = phospho-[DNA-directed RNA polymerase] + ADP + H(+). With respect to regulation, phosphorylation at Thr-14 or Tyr-15 inactivates the enzyme, while phosphorylation at Thr-161 activates it. Activated through a multistep process; binding to cyclin-B is required for relocation of cyclin-kinase complexes to the nucleus, activated by CAK/CDK7-mediated phosphorylation on Thr-161, and CDC25-mediated dephosphorylation of inhibitory phosphorylation on Thr-14 and Tyr-15. Activity is restricted during S-phase in an ATR-dependent manner to prevent premature entry into G2. Repressed by the CDK inhibitors CDKN1A/p21 and CDKN1B/p27 during the G1 phase and by CDKN1A/p21 at the G1-S checkpoint upon DNA damage. Transient activation by rapid and transient dephosphorylation at Tyr-15 triggered by TGFB1. Inhibited by flavopiridol and derivatives, pyrimidine derivatives, pyridine derivatives, purine derivatives, staurosporine, paullones, oxoindoles, indazole analogs, indolin-2-ones, pyrazolo[3,4-b]pyridines, imidazo[1,2-a]pyridine (AZ703), thiazolinone analogs(RO-3306), thiazol urea, macrocyclic quinoxalin-2-one, pyrrolo[2,3-a]carbazole, pyrazolo[1,5-a]-1,3,5-triazine, pyrazolo[1,5-a]pyrimidine (Dinaciclib, SCH 727965), 2-(1-ethyl-2-hydroxyethylamino)-6-benzylamino-9-isopropylpurine (roscovitine), olomoucine, AG-024322, AT-7519, P276-00, R547/Ro-4584820 and SNS-032/BMS-387032. Plays a key role in the control of the eukaryotic cell cycle by modulating the centrosome cycle as well as mitotic onset; promotes G2-M transition via association with multiple interphase cyclins. Phosphorylates PARVA/actopaxin, APC, AMPH, APC, BARD1, Bcl-xL/BCL2L1, BRCA2, CALD1, CASP8, CDC7, CDC20, CDC25A, CDC25C, CC2D1A, CENPA, CSNK2 proteins/CKII, FZR1/CDH1, CDK7, CEBPB, CHAMP1, DMD/dystrophin, EEF1 proteins/EF-1, EZH2, KIF11/EG5, EGFR, FANCG, FOS, GFAP, GOLGA2/GM130, GRASP1, UBE2A/hHR6A, HIST1H1 proteins/histone H1, HMGA1, HIVEP3/KRC, KAT5, LMNA, LMNB, LBR, MKI67, LATS1, MAP1B, MAP4, MARCKS, MCM2, MCM4, MKLP1, MLST8, MYB, NEFH, NFIC, NPC/nuclear pore complex, PITPNM1/NIR2, NPM1, NCL, NUCKS1, NPM1/numatrin, ORC1, PRKAR2A, EEF1E1/p18, EIF3F/p47, p53/TP53, NONO/p54NRB, PAPOLA, PLEC/plectin, RB1, TPPP, UL40/R2, RAB4A, RAP1GAP, RBBP8/CtIP, RCC1, RPS6KB1/S6K1, KHDRBS1/SAM68, ESPL1, SKI, BIRC5/survivin, STIP1, TEX14, beta-tubulins, MAPT/TAU, NEDD1, VIM/vimentin, TK1, FOXO1, RUNX1/AML1, SAMHD1, SIRT2, CGAS and RUNX2. CDK1/CDC2-cyclin-B controls pronuclear union in interphase fertilized eggs. Essential for early stages of embryonic development. During G2 and early mitosis, CDC25A/B/C-mediated dephosphorylation activates CDK1/cyclin complexes which phosphorylate several substrates that trigger at least centrosome separation, Golgi dynamics, nuclear envelope breakdown and chromosome condensation. Once chromosomes are condensed and aligned at the metaphase plate, CDK1 activity is switched off by WEE1- and PKMYT1-mediated phosphorylation to allow sister chromatid separation, chromosome decondensation, reformation of the nuclear envelope and cytokinesis. Phosphorylates KRT5 during prometaphase and metaphase. Inactivated by PKR/EIF2AK2- and WEE1-mediated phosphorylation upon DNA damage to stop cell cycle and genome replication at the G2 checkpoint thus facilitating DNA repair. Reactivated after successful DNA repair through WIP1-dependent signaling leading to CDC25A/B/C-mediated dephosphorylation and restoring cell cycle progression. Catalyzes lamin (LMNA, LMNB1 and LMNB2) phosphorylation at the onset of mitosis, promoting nuclear envelope breakdown. In proliferating cells, CDK1-mediated FOXO1 phosphorylation at the G2-M phase represses FOXO1 interaction with 14-3-3 proteins and thereby promotes FOXO1 nuclear accumulation and transcription factor activity, leading to cell death of postmitotic neurons. The phosphorylation of beta-tubulins regulates microtubule dynamics during mitosis. NEDD1 phosphorylation promotes PLK1-mediated NEDD1 phosphorylation and subsequent targeting of the gamma-tubulin ring complex (gTuRC) to the centrosome, an important step for spindle formation. In addition, CC2D1A phosphorylation regulates CC2D1A spindle pole localization and association with SCC1/RAD21 and centriole cohesion during mitosis. The phosphorylation of Bcl-xL/BCL2L1 after prolongated G2 arrest upon DNA damage triggers apoptosis. In contrast, CASP8 phosphorylation during mitosis prevents its activation by proteolysis and subsequent apoptosis. This phosphorylation occurs in cancer cell lines, as well as in primary breast tissues and lymphocytes. EZH2 phosphorylation promotes H3K27me3 maintenance and epigenetic gene silencing. CALD1 phosphorylation promotes Schwann cell migration during peripheral nerve regeneration. CDK1-cyclin-B complex phosphorylates NCKAP5L and mediates its dissociation from centrosomes during mitosis. Regulates the amplitude of the cyclic expression of the core clock gene BMAL1 by phosphorylating its transcriptional repressor NR1D1, and this phosphorylation is necessary for SCF(FBXW7)-mediated ubiquitination and proteasomal degradation of NR1D1. Phosphorylates EML3 at 'Thr-881' which is essential for its interaction with HAUS augmin-like complex and TUBG1. Phosphorylates CGAS during mitosis, leading to its inhibition, thereby preventing CGAS activation by self DNA during mitosis. Phosphorylates SKA3 on multiple sites during mitosis which promotes SKA3 binding to the NDC80 complex and anchoring of the SKA complex to kinetochores, to enable stable attachment of mitotic spindle microtubules to kinetochores. Its function is as follows. (Microbial infection) Acts as a receptor for hepatitis C virus (HCV) in hepatocytes and facilitates its cell entry. This Homo sapiens (Human) protein is Cyclin-dependent kinase 1 (CDK1).